Consider the following 31-residue polypeptide: Cliotide T13 (31 aa).

The cyclopeptide (Asp-Asn) cross-link spans 1–31; it reads DTTPCGESCVWIPCVSSIVGCSCQNKVCYQN. Cystine bridges form between C5–C21, C9–C23, and C14–C28.

In terms of processing, contains 3 disulfide bonds. Post-translationally, this is a cyclic peptide. As to expression, expressed in seed but not in root nodules.

In terms of biological role, probably participates in a plant defense mechanism. Not active against Gram-negative bacterium E.coli ATCC 700926 or Gram-positive bacterium S.aureus ATCC 12600 up to a concentration of 100 uM under low-salt conditions. This Clitoria ternatea (Butterfly pea) protein is Cliotide T13.